Reading from the N-terminus, the 190-residue chain is Elongation factor P 2 (190 aa).

The protein belongs to the elongation factor P family.

The protein localises to the cytoplasm. It participates in protein biosynthesis; polypeptide chain elongation. Its function is as follows. Involved in peptide bond synthesis. Stimulates efficient translation and peptide-bond synthesis on native or reconstituted 70S ribosomes in vitro. Probably functions indirectly by altering the affinity of the ribosome for aminoacyl-tRNA, thus increasing their reactivity as acceptors for peptidyl transferase. This chain is Elongation factor P 2 (efp2), found in Chlamydia muridarum (strain MoPn / Nigg).